The sequence spans 405 residues: Elongation factor Tu (405 aa).

Residues 10 to 215 (KPHVNVGTIG…AIDAYIPTPE (206 aa)) enclose the tr-type G domain. The segment at 19 to 26 (GHVDHGKT) is G1. GTP is bound at residue 19–26 (GHVDHGKT). T26 is a binding site for Mg(2+). The interval 61–65 (GITIN) is G2. Residues 82–85 (DCPG) are G3. GTP contacts are provided by residues 82–86 (DCPGH) and 137–140 (NKVD). The interval 137 to 140 (NKVD) is G4. Residues 175-177 (SAL) are G5.

This sequence belongs to the TRAFAC class translation factor GTPase superfamily. Classic translation factor GTPase family. EF-Tu/EF-1A subfamily. Monomer.

It is found in the cytoplasm. The catalysed reaction is GTP + H2O = GDP + phosphate + H(+). GTP hydrolase that promotes the GTP-dependent binding of aminoacyl-tRNA to the A-site of ribosomes during protein biosynthesis. In Deinococcus geothermalis (strain DSM 11300 / CIP 105573 / AG-3a), this protein is Elongation factor Tu.